Reading from the N-terminus, the 693-residue chain is Histone-lysine N-methyltransferase, H3 lysine-9 specific SUVH7 (693 aa).

Disordered stretches follow at residues 64–99 and 111–175; these read WYDG…PPEM and DSSN…AETE. The a.T hook DNA-binding region spans 129-141; sequence KRGRGRPKGSKNS. Residues 227-373 enclose the YDG domain; the sequence is GAVPGIHVGD…FKEFRFKLVR (147 aa). A Pre-SET domain is found at 454 to 516; the sequence is QSLGCQNCRH…HCPTRLVQTG (63 aa). 9 residues coordinate Zn(2+): cysteine 458, cysteine 461, cysteine 466, cysteine 471, cysteine 473, cysteine 498, cysteine 502, cysteine 504, and cysteine 508. The 142-residue stretch at 519–660 folds into the SET domain; it reads LHLEVFKTRN…PMTELTYDYG (142 aa). S-adenosyl-L-methionine contacts are provided by residues 529–531, aspartate 562, tyrosine 564, arginine 614, and 617–618; these read CGW and NH. Zn(2+) contacts are provided by cysteine 620, cysteine 681, cysteine 683, and cysteine 688. In terms of domain architecture, Post-SET spans 677–693; that stretch reads GKKTCLCGSVKCRGSFT.

This sequence belongs to the class V-like SAM-binding methyltransferase superfamily. Histone-lysine methyltransferase family. Suvar3-9 subfamily.

Its subcellular location is the nucleus. The protein localises to the chromosome. It localises to the centromere. The enzyme catalyses N(6)-methyl-L-lysyl(9)-[histone H3] + S-adenosyl-L-methionine = N(6),N(6)-dimethyl-L-lysyl(9)-[histone H3] + S-adenosyl-L-homocysteine + H(+). It carries out the reaction L-lysyl(9)-[histone H3] + S-adenosyl-L-methionine = N(6)-methyl-L-lysyl(9)-[histone H3] + S-adenosyl-L-homocysteine + H(+). In terms of biological role, histone methyltransferase. Methylates 'Lys-9' of histone H3. H3 'Lys-9' methylation represents a specific tag for epigenetic transcriptional repression. This chain is Histone-lysine N-methyltransferase, H3 lysine-9 specific SUVH7 (SUVH7), found in Arabidopsis thaliana (Mouse-ear cress).